Reading from the N-terminus, the 181-residue chain is Probable RNA 2'-phosphotransferase (181 aa).

Belongs to the KptA/TPT1 family.

Functionally, removes the 2'-phosphate from RNA via an intermediate in which the phosphate is ADP-ribosylated by NAD followed by a presumed transesterification to release the RNA and generate ADP-ribose 1''-2''-cyclic phosphate (APPR&gt;P). May function as an ADP-ribosylase. The polypeptide is Probable RNA 2'-phosphotransferase (Acaryochloris marina (strain MBIC 11017)).